The chain runs to 270 residues: Phosphatidylglycerol--prolipoprotein diacylglyceryl transferase (270 aa).

4 consecutive transmembrane segments (helical) span residues 19 to 39 (FPVY…LWLA), 56 to 76 (LVLI…VIFE), 92 to 112 (QGGL…ILFA), and 116 to 136 (GVSF…GQAI). Residue arginine 138 coordinates a 1,2-diacyl-sn-glycero-3-phospho-(1'-sn-glycerol). Transmembrane regions (helical) follow at residues 178-198 (HPTF…LLAL), 206-226 (GELF…VEGL), and 236-256 (LRIA…FIIV).

Belongs to the Lgt family.

It is found in the cell membrane. The catalysed reaction is L-cysteinyl-[prolipoprotein] + a 1,2-diacyl-sn-glycero-3-phospho-(1'-sn-glycerol) = an S-1,2-diacyl-sn-glyceryl-L-cysteinyl-[prolipoprotein] + sn-glycerol 1-phosphate + H(+). Its pathway is protein modification; lipoprotein biosynthesis (diacylglyceryl transfer). Functionally, catalyzes the transfer of the diacylglyceryl group from phosphatidylglycerol to the sulfhydryl group of the N-terminal cysteine of a prolipoprotein, the first step in the formation of mature lipoproteins. In Bacillus cereus (strain ZK / E33L), this protein is Phosphatidylglycerol--prolipoprotein diacylglyceryl transferase.